The primary structure comprises 144 residues: Sec-independent protein translocase protein TatB (144 aa).

Residues 1 to 21 traverse the membrane as a helical segment; it reads MFEIGFWELVLVAIIGIVVVG. Residues 97–144 are disordered; that stretch reads KMIDEPPYQEPPPAAHSVQTDAEAYRDTGIEPADKSSSPEHHHDDAAR. Residues 119-144 are compositionally biased toward basic and acidic residues; it reads EAYRDTGIEPADKSSSPEHHHDDAAR.

This sequence belongs to the TatB family. In terms of assembly, the Tat system comprises two distinct complexes: a TatABC complex, containing multiple copies of TatA, TatB and TatC subunits, and a separate TatA complex, containing only TatA subunits. Substrates initially bind to the TatABC complex, which probably triggers association of the separate TatA complex to form the active translocon.

The protein localises to the cell inner membrane. In terms of biological role, part of the twin-arginine translocation (Tat) system that transports large folded proteins containing a characteristic twin-arginine motif in their signal peptide across membranes. Together with TatC, TatB is part of a receptor directly interacting with Tat signal peptides. TatB may form an oligomeric binding site that transiently accommodates folded Tat precursor proteins before their translocation. The polypeptide is Sec-independent protein translocase protein TatB (Dichelobacter nodosus (strain VCS1703A)).